Here is a 166-residue protein sequence, read N- to C-terminus: Lipoprotein signal peptidase (166 aa).

The next 4 helical transmembrane spans lie at 9 to 29 (AGGS…FDQL), 37 to 57 (VFAY…LVYN), 71 to 91 (WQRW…CYLL), and 100 to 120 (FCTA…DRLL). Active-site residues include aspartate 126 and aspartate 144. Residues 136–156 (HWPAFNLADSAITIGAALLVF) traverse the membrane as a helical segment.

It belongs to the peptidase A8 family.

The protein localises to the cell inner membrane. The catalysed reaction is Release of signal peptides from bacterial membrane prolipoproteins. Hydrolyzes -Xaa-Yaa-Zaa-|-(S,diacylglyceryl)Cys-, in which Xaa is hydrophobic (preferably Leu), and Yaa (Ala or Ser) and Zaa (Gly or Ala) have small, neutral side chains.. The protein operates within protein modification; lipoprotein biosynthesis (signal peptide cleavage). Its function is as follows. This protein specifically catalyzes the removal of signal peptides from prolipoproteins. The polypeptide is Lipoprotein signal peptidase (Paraburkholderia phymatum (strain DSM 17167 / CIP 108236 / LMG 21445 / STM815) (Burkholderia phymatum)).